A 412-amino-acid polypeptide reads, in one-letter code: Squamosa promoter-binding-like protein 2 (412 aa).

Residues 1–81 (MDWDAKMPSW…AAAAGKRARA (81 aa)) form a disordered region. Residues 18–31 (PSGGGGGGGGGGGA) show a composition bias toward gly residues. Low complexity-rich tracts occupy residues 48–57 (VSAASAAPAA) and 67–81 (SSSSSAAAAGKRARA). The segment at 89–167 (VPACSVEGCA…DGHNKRRRKP (79 aa)) adopts an SBP-type zinc-finger fold. Zn(2+)-binding residues include Cys92, Cys97, Cys115, His118, Cys134, Cys137, His141, and Cys153. The short motif at 150–166 (KRSCRKRLDGHNKRRRK) is the Bipartite nuclear localization signal element.

In terms of tissue distribution, expressed in stems, leaf sheaths, and young panicles.

It is found in the nucleus. Functionally, trans-acting factor that binds specifically to the consensus nucleotide sequence 5'-TNCGTACAA-3'. May be involved in panicle development. This Oryza sativa subsp. japonica (Rice) protein is Squamosa promoter-binding-like protein 2 (SPL2).